The primary structure comprises 365 residues: Transcription factor aptf-1 (365 aa).

Disordered stretches follow at residues 13-40 (EFVRGSQCDEEDEEEQQRQSSQRPPFYE) and 93-126 (TPPQQQQQQGTGGSGEEDYCIPKSEDRDHSSNYS). The interval 223–356 (RRKQANVTAW…MIDESIKYID (134 aa)) is H-S-H (helix-span-helix), dimerization.

It belongs to the AP-2 family. Binds DNA as a dimer. Expressed in five interneurons AIB, RIB and RIS.

It localises to the nucleus. In terms of biological role, transcription factor, which is required in the single sleep-active ring interneuron RIS for sleep-like behavioral quiescence induced by neuropeptide signaling in larvae. Regulates gene expression of sleep-inducing FMRFamide-like neuropeptide flp-11 in RIS. The chain is Transcription factor aptf-1 from Caenorhabditis elegans.